The following is a 456-amino-acid chain: tRNA modification GTPase MnmE (456 aa).

Positions 24, 81, and 120 each coordinate (6S)-5-formyl-5,6,7,8-tetrahydrofolate. The 164-residue stretch at 216–379 folds into the TrmE-type G domain; it reads GMTVVIAGRP…LRDHLKACMG (164 aa). Asn-226 is a binding site for K(+). GTP is bound by residues 226-231, 245-251, 270-273, and 335-338; these read NAGKSS, TEIAGTT, DTAG, and NKAD. Ser-230 is a binding site for Mg(2+). Thr-245, Ile-247, and Thr-250 together coordinate K(+). Residue Thr-251 coordinates Mg(2+). Lys-456 provides a ligand contact to (6S)-5-formyl-5,6,7,8-tetrahydrofolate.

This sequence belongs to the TRAFAC class TrmE-Era-EngA-EngB-Septin-like GTPase superfamily. TrmE GTPase family. As to quaternary structure, homodimer. Heterotetramer of two MnmE and two MnmG subunits. It depends on K(+) as a cofactor.

It localises to the cytoplasm. Its function is as follows. Exhibits a very high intrinsic GTPase hydrolysis rate. Involved in the addition of a carboxymethylaminomethyl (cmnm) group at the wobble position (U34) of certain tRNAs, forming tRNA-cmnm(5)s(2)U34. The chain is tRNA modification GTPase MnmE from Pseudomonas fluorescens (strain Pf0-1).